Reading from the N-terminus, the 208-residue chain is Interleukin-6 (208 aa).

A signal peptide spans 1 to 29; the sequence is MNSLFTSAFSPLAVSLGLLLVMTSAFPTP. An N-linked (GlcNAc...) asparagine glycan is attached at N38. The cysteines at positions 72 and 78 are disulfide-linked. Position 81 is a phosphoserine (S81). Residues C101 and C111 are joined by a disulfide bond.

Belongs to the IL-6 superfamily. As to quaternary structure, component of a hexamer of two molecules each of IL6, IL6R and IL6ST; first binds to IL6R to associate with the signaling subunit IL6ST. Interacts with IL6R (via the N-terminal ectodomain); this interaction may be affected by IL6R-binding with SORL1, hence decreasing IL6 cis signaling. Interacts with SORL1 (via the N-terminal ectodomain); this interaction leads to IL6 internalization and lysosomal degradation. May form a trimeric complex with the soluble SORL1 ectodomain and soluble IL6R receptor; this interaction might stabilize circulating IL6, hence promoting IL6 trans signaling.

The protein localises to the secreted. In terms of biological role, cytokine with a wide variety of biological functions in immunity, tissue regeneration, and metabolism. Binds to IL6R, then the complex associates to the signaling subunit IL6ST/gp130 to trigger the intracellular IL6-signaling pathway. The interaction with the membrane-bound IL6R and IL6ST stimulates 'classic signaling', whereas the binding of IL6 and soluble IL6R to IL6ST stimulates 'trans-signaling'. Alternatively, 'cluster signaling' occurs when membrane-bound IL6:IL6R complexes on transmitter cells activate IL6ST receptors on neighboring receiver cells. Its function is as follows. IL6 is a potent inducer of the acute phase response. Rapid production of IL6 contributes to host defense during infection and tissue injury, but excessive IL6 synthesis is involved in disease pathology. In the innate immune response, is synthesized by myeloid cells, such as macrophages and dendritic cells, upon recognition of pathogens through toll-like receptors (TLRs) at the site of infection or tissue injury. In the adaptive immune response, is required for the differentiation of B cells into immunoglobulin-secreting cells. Plays a major role in the differentiation of CD4(+) T cell subsets. Essential factor for the development of T follicular helper (Tfh) cells that are required for the induction of germinal-center formation. Required to drive naive CD4(+) T cells to the Th17 lineage. Also required for proliferation of myeloma cells and the survival of plasmablast cells. Acts as an essential factor in bone homeostasis and on vessels directly or indirectly by induction of VEGF, resulting in increased angiogenesis activity and vascular permeability. Induces, through 'trans-signaling' and synergistically with IL1B and TNF, the production of VEGF. Involved in metabolic controls, is discharged into the bloodstream after muscle contraction increasing lipolysis and improving insulin resistance. 'Trans-signaling' in central nervous system also regulates energy and glucose homeostasis. Mediates, through GLP-1, crosstalk between insulin-sensitive tissues, intestinal L cells and pancreatic islets to adapt to changes in insulin demand. Also acts as a myokine. Plays a protective role during liver injury, being required for maintenance of tissue regeneration. Also has a pivotal role in iron metabolism by regulating HAMP/hepcidin expression upon inflammation or bacterial infection. Through activation of IL6ST-YAP-NOTCH pathway, induces inflammation-induced epithelial regeneration. The protein is Interleukin-6 (IL6) of Capra hircus (Goat).